The chain runs to 381 residues: Putative F-box protein At4g17200 (381 aa).

In terms of domain architecture, F-box spans 1–47 (MTTMSDLSPDLVGEILTRVPMTSLISVRCTCKMWNALSKEGIFFKAA).

This chain is Putative F-box protein At4g17200, found in Arabidopsis thaliana (Mouse-ear cress).